The primary structure comprises 786 residues: Receptor-like protein 30 (786 aa).

The first 30 residues, M1 to A30, serve as a signal peptide directing secretion. Residues S31–W739 lie on the Extracellular side of the membrane. 4 N-linked (GlcNAc...) asparagine glycosylation sites follow: N67, N98, N115, and N133. LRR repeat units lie at residues L110–N133, L134–L158, N159–N181, and T183–L204. N-linked (GlcNAc...) asparagine glycans are attached at residues N181, N199, and N206. LRR repeat units lie at residues L207–L231, N233–I255, S257–S279, S280–I304, H305–L328, V329–L352, T354–G375, E376–Q399, R400–S423, Y425–N447, A448–C472, G474–L496, P497–H524, and R526–N546. Residue N276 is glycosylated (N-linked (GlcNAc...) asparagine). A glycan (N-linked (GlcNAc...) asparagine) is linked at N338. N-linked (GlcNAc...) asparagine glycans are attached at residues N413, N422, N434, N447, and N471. A glycan (N-linked (GlcNAc...) asparagine) is linked at N558. 4 LRR repeats span residues I596–L621, K622–L645, T646–L669, and F671–S694. N-linked (GlcNAc...) asparagine glycosylation is found at N628 and N644. N-linked (GlcNAc...) asparagine glycosylation is present at N676. A helical membrane pass occupies residues I740–F760. Over F761–R786 the chain is Cytoplasmic.

The protein belongs to the RLP family.

It is found in the cell membrane. In terms of biological role, receptor for microbe-associated molecular patterns (MAMPs) that induces a BAK1-dependent basal immune response to necrotrophic fungi (e.g. S.sclerotiorum) in the presence of MAMPs (e.g. flg22 and SCLEROTINIA CULTURE FILTRATE ELICITOR1 (SCFE1) from the necrotrophic fungal pathogen S.sclerotiorum). Functionality seems to depend on the presence of the receptor kinase SOBIR1 as an adapter protein. Required for full non-host resistance to bacterial pathogens (e.g. P.syringae pv phaseolicola). The protein is Receptor-like protein 30 of Arabidopsis thaliana (Mouse-ear cress).